The sequence spans 229 residues: Trehalose-6-phosphate phosphatase-related protein (229 aa).

The Nucleophile role is filled by Asp5. Mg(2+)-binding residues include Asp5, Asp7, and Asp177. Residue 5–7 (DYD) coordinates substrate.

Belongs to the trehalose phosphatase family. It depends on Mg(2+) as a cofactor.

The catalysed reaction is alpha,alpha-trehalose 6-phosphate + H2O = alpha,alpha-trehalose + phosphate. The protein operates within glycan biosynthesis; trehalose biosynthesis. Functionally, removes the phosphate from trehalose 6-phosphate (Tre6P) to produce free trehalose. Also catalyzes the dephosphorylation of para-nitrophenyl phosphate (pNPP), but with lesser efficiency (in vitro). This Thermoplasma acidophilum (strain ATCC 25905 / DSM 1728 / JCM 9062 / NBRC 15155 / AMRC-C165) protein is Trehalose-6-phosphate phosphatase-related protein.